The following is a 480-amino-acid chain: MEISERARARLAVLNAHLTVSEPNQVLPAIEPWCTSAHITAAPHGSLKGNLKIVDERTGNEYQVPVSEHGTVKTVDLKKITTGKDDKGLNLYDPGYLNTAPVRSSISYIDGDEGILRYRGYPVEELAEKSTYTEVTYLLIYGNLPSQRQLADWEFAISQNSAVPQGVLDMIQSMPNDVHPVGALVTAMSALSIFYPDANPSLMGLGVYKSKQVRDKQIVRVLGQAPTIAAAAYLRKAGKPPVQPLSNLSYSENFLYMVESMGDRSYKPNPRLARVLDILFILQAEHEMNCSTAAARHLSSSGGDVYTAVSGGVGAIYGPLHGGAVEATINMLSEIGTVENIPEFIESVKNKKRRLSGFGHRIYKNYDPRGKVVKKLADEVFSILGRDPLVEVGDALEKAALSDEYFVKRKLYPNVDFYSGLINRAMGIPSSFTAVSRIAGYLSHWRESLDDPDTKIMRPQQVYTGAGIRHYETVRERTKL.

Active-site residues include His-321, His-360, and Asp-416.

The protein belongs to the citrate synthase family. As to expression, expressed only in siliques. Not expressed in flower, stem, cauline leaf, young leaf, mature leaf and senescent leaf.

The protein resides in the peroxisome. It carries out the reaction oxaloacetate + acetyl-CoA + H2O = citrate + CoA + H(+). Its pathway is carbohydrate metabolism; tricarboxylic acid cycle; isocitrate from oxaloacetate: step 1/2. This chain is Citrate synthase 1, peroxisomal (CSY1), found in Arabidopsis thaliana (Mouse-ear cress).